A 471-amino-acid polypeptide reads, in one-letter code: Cysteine--tRNA ligase (471 aa).

C29 lines the Zn(2+) pocket. The short motif at 31 to 41 (PTVYNYIHIGN) is the 'HIGH' region element. Residues C209, H234, and E238 each contribute to the Zn(2+) site. A 'KMSKS' region motif is present at residues 266–270 (KMSKS). K269 serves as a coordination point for ATP.

Belongs to the class-I aminoacyl-tRNA synthetase family. As to quaternary structure, monomer. It depends on Zn(2+) as a cofactor.

The protein localises to the cytoplasm. It carries out the reaction tRNA(Cys) + L-cysteine + ATP = L-cysteinyl-tRNA(Cys) + AMP + diphosphate. The sequence is that of Cysteine--tRNA ligase from Listeria innocua serovar 6a (strain ATCC BAA-680 / CLIP 11262).